The following is a 31-amino-acid chain: Cytochrome b6-f complex subunit 6 (31 aa).

Residues 4–24 traverse the membrane as a helical segment; that stretch reads ITSFFGFLLAALTITSVLFIG.

This sequence belongs to the PetL family. The 4 large subunits of the cytochrome b6-f complex are cytochrome b6, subunit IV (17 kDa polypeptide, PetD), cytochrome f and the Rieske protein, while the 4 small subunits are PetG, PetL, PetM and PetN. The complex functions as a dimer.

It localises to the plastid. Its subcellular location is the chloroplast thylakoid membrane. Component of the cytochrome b6-f complex, which mediates electron transfer between photosystem II (PSII) and photosystem I (PSI), cyclic electron flow around PSI, and state transitions. PetL is important for photoautotrophic growth as well as for electron transfer efficiency and stability of the cytochrome b6-f complex. The polypeptide is Cytochrome b6-f complex subunit 6 (Oenothera elata subsp. hookeri (Hooker's evening primrose)).